Reading from the N-terminus, the 567-residue chain is Probable diguanylate cyclase DgcQ (567 aa).

2 helical membrane-spanning segments follow: residues 20–40 (FGPG…STLL) and 357–377 (IALT…WGVI). A GGDEF domain is found at 425–560 (QPFSVIQLDL…GRNRICASDA (136 aa)). Residue Asp433 coordinates Mg(2+). Substrate contacts are provided by Asn441, His446, and Asp450. Mg(2+) is bound at residue Glu476. The active-site Proton acceptor is the Glu476.

As to quaternary structure, homodimer. Mg(2+) is required as a cofactor.

The protein resides in the cell inner membrane. The catalysed reaction is 2 GTP = 3',3'-c-di-GMP + 2 diphosphate. It functions in the pathway glycan metabolism; bacterial cellulose biosynthesis. The protein operates within purine metabolism; 3',5'-cyclic di-GMP biosynthesis. Catalyzes the synthesis of cyclic-di-GMP (c-di-GMP) via the condensation of 2 GTP molecules. Cyclic-di-GMP is a second messenger which controls cell surface-associated traits in bacteria. Involved in the regulation of cellulose production. The chain is Probable diguanylate cyclase DgcQ from Salmonella typhi.